A 162-amino-acid polypeptide reads, in one-letter code: Phosphopantetheine adenylyltransferase (162 aa).

T9 provides a ligand contact to substrate. Residues 9–10 (TF) and H17 contribute to the ATP site. Substrate contacts are provided by K41, L77, and R91. ATP is bound by residues 92–94 (GLR), E102, and 127–133 (RQAIASK).

This sequence belongs to the bacterial CoaD family. In terms of assembly, homohexamer. The cofactor is Mg(2+).

The protein resides in the cytoplasm. It carries out the reaction (R)-4'-phosphopantetheine + ATP + H(+) = 3'-dephospho-CoA + diphosphate. The protein operates within cofactor biosynthesis; coenzyme A biosynthesis; CoA from (R)-pantothenate: step 4/5. Its function is as follows. Reversibly transfers an adenylyl group from ATP to 4'-phosphopantetheine, yielding dephospho-CoA (dPCoA) and pyrophosphate. The chain is Phosphopantetheine adenylyltransferase from Cereibacter sphaeroides (strain ATCC 17029 / ATH 2.4.9) (Rhodobacter sphaeroides).